The chain runs to 535 residues: MNDHEVDVLVVGAGLGGLSTAMFLARQGVRVLVVERRPGLSPYPRAAGQNPRTMELLRIGGVADEVVRADDIRGTQGDFVIRLAESVRGEILRTVSESFDDMVAATEPCTPAGWAMLSQDKLEPILLAQARKHGGAIRFGTRLLSFRQHDDDAGAGVTARLAGPDGEYDLRAGYLVGADGNRSLVRESLGIGRYGHGTLTHMVGVIFDADLSGIMEPGTTGWYYLHHPEFKGTFGPTDRPDRHTLFVEYDPDEGERPEDFTPQRCVELIGLALDAPEVKPELVDIQGWEMAARIAERWREGRVFLAGDAAKVTPPTGGMSGNAAVADGFDLAWKLAAVLQGQAGAGLLDTYEDERKVAAELVVAEALAIYAQRMAPHMAEVWDKSVGYPETLLGFRYRSSAVLATDDDPARVENPLTPSGRPGFRGPHVLVSRHGERLSTVDLFGDGWTLLAGELGADWVAAAEAVSAELGVPVRAYRVGAGLTDPESAVSERYGIGKAGASLVRPDGIVAWRTDEAAADAAQTLEGVLRRVLDR.

FAD-binding residues include Leu15, Gly16, Glu35, Gln119, and Leu143. Tyr224 serves as the catalytic Proton acceptor. Asp308 is an FAD binding site. Gly317 serves as a coordination point for aklavinone.

The protein belongs to the PheA/TfdB FAD monooxygenase family. Monomer. FAD serves as cofactor.

The enzyme catalyses aklavinone + NADPH + O2 + H(+) = epsilon-rhodomycinone + NADP(+) + H2O. It functions in the pathway antibiotic biosynthesis; daunorubicin biosynthesis. Its pathway is antibiotic biosynthesis; carminomycin biosynthesis. The protein operates within antibiotic biosynthesis; rhodomycin biosynthesis. Its activity is regulated as follows. Inhibited by phenylglyoxal and 2,3-butanedione. NADP provides a partial protection against inhibition by phenylglyoxal. Increasing the methanol concentration in the assay causes inhibition of the enzyme. Involved in the biosynthesis of the anthracyclines carminomycin, rhodomycin and daunorubicin (daunomycin) which are aromatic polyketide antibiotics that exhibit high cytotoxicity and are widely applied in the chemotherapy of a variety of cancers. Catalyzes the incorporation of a hydroxyl group at position C-11 of aklavinone, resulting in epsilon-rhodomycinone. It cannot accept substrates glycosylated at position C-7 and is specific for the C-9R configuration of anthracyclines. It can use both NAD or NADP but it is slowly inactivated in the presence of NADH. In Streptomyces purpurascens, this protein is Aklavinone 12-hydroxylase RdmE (rdmE).